Here is a 311-residue protein sequence, read N- to C-terminus: Ribosomal protein L11 methyltransferase (311 aa).

S-adenosyl-L-methionine-binding residues include Thr163, Gly184, Asp206, and Asn248.

It belongs to the methyltransferase superfamily. PrmA family.

Its subcellular location is the cytoplasm. It catalyses the reaction L-lysyl-[protein] + 3 S-adenosyl-L-methionine = N(6),N(6),N(6)-trimethyl-L-lysyl-[protein] + 3 S-adenosyl-L-homocysteine + 3 H(+). Methylates ribosomal protein L11. The chain is Ribosomal protein L11 methyltransferase from Clostridium acetobutylicum (strain ATCC 824 / DSM 792 / JCM 1419 / IAM 19013 / LMG 5710 / NBRC 13948 / NRRL B-527 / VKM B-1787 / 2291 / W).